Here is a 189-residue protein sequence, read N- to C-terminus: Threonylcarbamoyl-AMP synthase (189 aa).

Residues 6-189 (SPAFESVLTA…ALTGELYRQG (184 aa)) form the YrdC-like domain.

It belongs to the SUA5 family. TsaC subfamily.

The protein localises to the cytoplasm. It catalyses the reaction L-threonine + hydrogencarbonate + ATP = L-threonylcarbamoyladenylate + diphosphate + H2O. In terms of biological role, required for the formation of a threonylcarbamoyl group on adenosine at position 37 (t(6)A37) in tRNAs that read codons beginning with adenine. Catalyzes the conversion of L-threonine, HCO(3)(-)/CO(2) and ATP to give threonylcarbamoyl-AMP (TC-AMP) as the acyladenylate intermediate, with the release of diphosphate. The polypeptide is Threonylcarbamoyl-AMP synthase (Photorhabdus laumondii subsp. laumondii (strain DSM 15139 / CIP 105565 / TT01) (Photorhabdus luminescens subsp. laumondii)).